The primary structure comprises 419 residues: POU domain, class 4, transcription factor 1 (419 aa).

Positions 57-66 (RAEALAAVDI) match the POU-IV box motif. 2 disordered regions span residues 94–117 (STVP…GDLL) and 131–197 (AGGA…HSLG). Basic residues predominate over residues 99–108 (AHHHHHHHHH). The segment covering 131–184 (AGGAGAAAGGGGAHDGPGGGGGPGGGGGPGGGPGGGGGGGPGGGGGGPGGGLLG) has biased composition (gly residues). The region spanning 261–338 (SDTDPRELEA…LQAWLEEAEG (78 aa)) is the POU-specific domain. A DNA-binding region (homeobox) is located at residues 356 to 415 (KRKRTSIAAPEKRSLEAYFAVQPRPSSEKIAAIAEKLDLKKNVVRVWFCNQRQKQKRMKF).

The protein belongs to the POU transcription factor family. Class-4 subfamily. Interacts (via N-terminus) with RIT2; the interaction controls POU4F1 transactivation activity on some neuronal target genes. Isoform 1 interacts with POU4F2; this interaction inhibits both POU4F1 DNA-binding and transcriptional activities. Isoform 1 interacts (C-terminus) with ESR1 (via DNA-binding domain); this interaction decreases the estrogen receptor ESR1 transcriptional activity in a DNA- and ligand 17-beta-estradiol-independent manner. In terms of tissue distribution, expressed in the brain and the retina. Present in the developing brain, spinal cord and eye.

Its subcellular location is the nucleus. The protein resides in the cytoplasm. Multifunctional transcription factor with different regions mediating its different effects. Acts by binding (via its C-terminal domain) to sequences related to the consensus octamer motif 5'-ATGCAAAT-3' in the regulatory regions of its target genes. Regulates the expression of specific genes involved in differentiation and survival within a subset of neuronal lineages. It has been shown that activation of some of these genes requires its N-terminal domain, maybe through a neuronal-specific cofactor. Activates BCL2 expression and protects neuronal cells from apoptosis (via the N-terminal domain). Induces neuronal process outgrowth and the coordinate expression of genes encoding synaptic proteins. Exerts its major developmental effects in somatosensory neurons and in brainstem nuclei involved in motor control. Stimulates the binding affinity of the nuclear estrogene receptor ESR1 to DNA estrogen response element (ERE), and hence modulates ESR1-induced transcriptional activity. May positively regulate POU4F2 and POU4F3. Regulates dorsal root ganglion sensory neuron specification and axonal projection into the spinal cord. Plays a role in TNFSF11-mediated terminal osteoclast differentiation. Negatively regulates its own expression interacting directly with a highly conserved autoregulatory domain surrounding the transcription initiation site. Functionally, able to act as transcription factor, cannot regulate the expression of the same subset of genes than isoform 1. Does not have antiapoptotic effect on neuronal cells. The polypeptide is POU domain, class 4, transcription factor 1 (Homo sapiens (Human)).